Consider the following 307-residue polypeptide: Fructose-bisphosphate aldolase (307 aa).

Serine 49 provides a ligand contact to D-glyceraldehyde 3-phosphate. Residue aspartate 82 is the Proton donor of the active site. Zn(2+) contacts are provided by histidine 83, aspartate 104, glutamate 134, and histidine 180. Glycine 181 serves as a coordination point for dihydroxyacetone phosphate. Histidine 210 serves as a coordination point for Zn(2+). Dihydroxyacetone phosphate is bound by residues 211-213 (GAS) and 253-256 (NTDT).

Belongs to the class II fructose-bisphosphate aldolase family. As to quaternary structure, homodimer. It depends on Zn(2+) as a cofactor.

It carries out the reaction beta-D-fructose 1,6-bisphosphate = D-glyceraldehyde 3-phosphate + dihydroxyacetone phosphate. The protein operates within carbohydrate degradation; glycolysis; D-glyceraldehyde 3-phosphate and glycerone phosphate from D-glucose: step 4/4. Catalyzes the aldol condensation of dihydroxyacetone phosphate (DHAP or glycerone-phosphate) with glyceraldehyde 3-phosphate (G3P) to form fructose 1,6-bisphosphate (FBP) in gluconeogenesis and the reverse reaction in glycolysis. This is Fructose-bisphosphate aldolase (fba) from Helicobacter pylori (strain ATCC 700392 / 26695) (Campylobacter pylori).